The sequence spans 600 residues: Torsin-1A-interacting protein 1 (600 aa).

Positions M1–G14 are enriched in basic and acidic residues. 2 disordered regions span residues M1–S261 and M310–S346. Residues M1–R354 are Nuclear-facing. S61 carries the phosphoserine modification. Basic and acidic residues-rich tracts occupy residues F71 to R81, F91 to E102, and R116 to T125. Phosphoserine is present on residues S137, S145, S156, S158, S159, and S189. The segment covering P192–S203 has biased composition (low complexity). Acidic residues predominate over residues E219 to D232. The residue at position 223 (T223) is a Phosphothreonine. Residues S230, S233, and S244 each carry the phosphoserine modification. The span at S247–S261 shows a compositional bias: polar residues. S322 is subject to Phosphoserine. A Glycyl lysine isopeptide (Lys-Gly) (interchain with G-Cter in SUMO2) cross-link involves residue K325. Polar residues predominate over residues K325–S346. The residue at position 332 (S332) is a Phosphoserine. A helical membrane pass occupies residues Y355–Y371. The Perinuclear space portion of the chain corresponds to T372–L600. Residues R373–L600 form an interaction with TOR1A region. Residues E376–S452 adopt a coiled-coil conformation. The N-linked (GlcNAc...) asparagine glycan is linked to N416.

It belongs to the TOR1AIP family. As to quaternary structure, interacts with ATP1B4. Interacts with TOR1A (ATP-bound). Interacts with TOR1B, TOR2A and TOR3A. Interacts with VIM.

The protein localises to the nucleus inner membrane. In terms of biological role, required for nuclear membrane integrity. Induces TOR1A and TOR1B ATPase activity and is required for their location on the nuclear membrane. Binds to A- and B-type lamins. Possible role in membrane attachment and assembly of the nuclear lamina. The protein is Torsin-1A-interacting protein 1 (TOR1AIP1) of Bos taurus (Bovine).